The chain runs to 3391 residues: Genome polyprotein (3391 aa).

Residues 1-15 (MNNQRKKAKNTPFNM) are interaction with host EXOC1. The Cytoplasmic segment spans residues 1–101 (MNNQRKKAKN…LNILNRRRRS (101 aa)). Residues 37–72 (MLQGRGPLKLFMALVAFLRFLTIPPTAGILKRWGTI) are hydrophobic; homodimerization of capsid protein C. Residues 101–114 (SAGMIIMLIPTVMA) constitute a propeptide, ER anchor for the capsid protein C, removed in mature form by serine protease NS3. The chain crosses the membrane as a helical span at residues 102–122 (AGMIIMLIPTVMAFHLTTRNG). Topologically, residues 123 to 238 (EPHMIVSRQE…GAWKHAQRIE (116 aa)) are extracellular. N-linked (GlcNAc...) asparagine; by host glycosylation is present at Asn-183. The helical transmembrane segment at 239–259 (TWILRHPGFTIMAAILAYTIG) threads the bilayer. The Cytoplasmic portion of the chain corresponds to 260-265 (TTHFQR). Residues 266-280 (ALIFILLTAVAPSMT) form a helical membrane-spanning segment. Over 281–725 (MRCIGISNRD…LHQVFGAIYG (445 aa)) the chain is Extracellular. 4 cysteine pairs are disulfide-bonded: Cys-283-Cys-310, Cys-340-Cys-401, Cys-354-Cys-385, and Cys-372-Cys-396. N-linked (GlcNAc...) asparagine; by host glycosylation occurs at Asn-347. The segment at 378–391 (DRGWGNGCGLFGKG) is fusion peptide. A glycan (N-linked (GlcNAc...) asparagine; by host) is linked at Asn-433. Intrachain disulfides connect Cys-465–Cys-565 and Cys-582–Cys-613. A helical transmembrane segment spans residues 726-746 (AAFSGVSWTMKILIGVIITWI). The Cytoplasmic segment spans residues 747–752 (GMNSRS). Residues 753–773 (TSLSVSLVLVGIVTLYLGVMV) form a helical membrane-spanning segment. The Extracellular segment spans residues 774-1195 (QADSGCVVSW…MVGATMTDDI (422 aa)). 6 cysteine pairs are disulfide-bonded: Cys-779-Cys-790, Cys-830-Cys-918, Cys-954-Cys-998, Cys-1055-Cys-1104, Cys-1066-Cys-1088, and Cys-1087-Cys-1091. Asn-905 and Asn-982 each carry an N-linked (GlcNAc...) asparagine; by host glycan. Asn-1134 carries N-linked (GlcNAc...) asparagine; by host glycosylation. The helical transmembrane segment at 1196–1220 (GMGVTYLALLAAFKVRPTFAAGLLL) threads the bilayer. The Cytoplasmic portion of the chain corresponds to 1221-1226 (RKLTSK). A helical membrane pass occupies residues 1227–1245 (ELMMTTIGIVLLSQSTIPE). The Lumenal segment spans residues 1246–1269 (TILELTDALALGMMVLKMVRNMEK). A helical transmembrane segment spans residues 1270 to 1290 (YQLAVTIMAILCVPNAVILQN). Residue Ala-1291 is a topological domain, cytoplasmic. The helical transmembrane segment at 1292 to 1310 (WKVSCTILAVVSVSPLLLT) threads the bilayer. Residues 1311-1317 (SSQQKTD) lie on the Lumenal side of the membrane. Residues 1318–1338 (WIPLALTIKGLNPTAIFLTTL) traverse the membrane as a helical segment. Topologically, residues 1339–1346 (SRTSKKRS) are cytoplasmic. The helical transmembrane segment at 1347–1367 (WPLNEAIMAVGMVSILASSLL) threads the bilayer. Topologically, residues 1368 to 1370 (KND) are lumenal. A helical membrane pass occupies residues 1371–1391 (IPMTGPLVAGGLLTVCYVLTG). Topologically, residues 1392-1447 (RSADLELERAADVKWEDQAEISGSSPILSITISEDGSMSIKNEEEEQTLTILIRTG) are cytoplasmic. The segment at 1398-1437 (LERAADVKWEDQAEISGSSPILSITISEDGSMSIKNEEEE) is interacts with and activates NS3 protease. The helical intramembrane region spans 1448-1468 (LLVISGLFPVSIPITAAAWYL). Over 1469 to 2147 (WEVKKQRAGV…LSELPETLET (679 aa)) the chain is Cytoplasmic. Residues 1476–1653 (AGVLWDVPSP…EKSIEDNPEI (178 aa)) enclose the Peptidase S7 domain. Catalysis depends on charge relay system; for serine protease NS3 activity residues His-1526, Asp-1550, and Ser-1610. Residues 1655–1811 (DDIFRKRRLT…QSNAPIIDEE (157 aa)) enclose the Helicase ATP-binding domain. The segment at 1659–1662 (RKRR) is important for RNA-binding. 1668–1675 (LHPGAGKT) is a binding site for ATP. The short motif at 1759–1762 (DEAH) is the DEAH box element. The region spanning 1821–1988 (SGHEWVTDFK…IIPSMFEPER (168 aa)) is the Helicase C-terminal domain. Lys-1863 is subject to N6-acetyllysine; by host. The helical transmembrane segment at 2148–2168 (LLLLTLLATVTGGIFLFLMSG) threads the bilayer. Residues 2169-2170 (RG) lie on the Lumenal side of the membrane. An intramembrane region (helical) is located at residues 2171–2191 (IGKMTLGMCCIITASVLLWYA). Position 2192 (Gln-2192) is a topological domain, lumenal. A helical transmembrane segment spans residues 2193–2213 (IQPHWIAASIILEFFLIVLLI). Over 2214–2228 (PEPEKQRTPQDNQLT) the chain is Cytoplasmic. Residues 2229 to 2249 (YVVIAILTVVAATMANEMGFL) form a helical membrane-spanning segment. The Lumenal portion of the chain corresponds to 2250–2274 (EKTKKDLGLGSIATQQPESNILDID). The segment at residues 2275–2295 (LRPASAWTLYAVATTFVTPML) is an intramembrane region (helical). The Lumenal portion of the chain corresponds to 2296 to 2316 (RHSIENSSVNVSLTAIANQAT). N-linked (GlcNAc...) asparagine; by host glycans are attached at residues Asn-2301 and Asn-2305. Positions 2317–2337 (VLMGLGKGWPLSKMDIGVPLL) form an intramembrane region, helical. Residues 2338–2347 (AIGCYSQVNP) lie on the Lumenal side of the membrane. Residues 2348 to 2368 (ITLTAALLLLVAHYAIIGPGL) form a helical membrane-spanning segment. Topologically, residues 2369 to 2413 (QAKATREAQKRAAAGIMKNPTVDGITVIDLDPIPYDPKFEKQLGQ) are cytoplasmic. A helical membrane pass occupies residues 2414 to 2434 (VMLLVLCVTQVLMMRTTWALC). Residues 2435-2459 (EALTLATGPISTLWEGNPGRFWNTT) lie on the Lumenal side of the membrane. Asn-2457 is a glycosylation site (N-linked (GlcNAc...) asparagine; by host). A helical transmembrane segment spans residues 2460–2480 (IAVSMANIFRGSYLAGAGLLF). At 2481-3391 (SIMKNTTNTR…REEEEAGVLW (911 aa)) the chain is on the cytoplasmic side. An mRNA cap 0-1 NS5-type MT domain is found at 2493–2755 (TGNIGETLGE…DVDLGSGTRN (263 aa)). Ser-2547 is an S-adenosyl-L-methionine binding site. Ser-2547 bears the Phosphoserine mark. Residue Lys-2552 is the For 2'-O-MTase activity of the active site. The short motif at 2568–2571 (VVDL) is the SUMO-interacting motif element. 6 residues coordinate S-adenosyl-L-methionine: Gly-2577, Trp-2578, Thr-2595, Lys-2596, Asp-2622, and Val-2623. Asp-2637 serves as the catalytic For 2'-O-MTase activity. Ile-2638 contacts S-adenosyl-L-methionine. Active-site for 2'-O-MTase activity residues include Lys-2672 and Glu-2708. Tyr-2710 is a binding site for S-adenosyl-L-methionine. Zn(2+)-binding residues include Glu-2929, His-2933, Cys-2938, and Cys-2941. The region spanning 3020–3169 (AMYADDTAGW…PLDDRFASAL (150 aa)) is the RdRp catalytic domain. Zn(2+)-binding residues include His-3203, Cys-3219, and Cys-3338.

The protein in the N-terminal section; belongs to the class I-like SAM-binding methyltransferase superfamily. mRNA cap 0-1 NS5-type methyltransferase family. In terms of assembly, homodimer. Interacts (via N-terminus) with host EXOC1 (via C-terminus); this interaction results in EXOC1 degradation through the proteasome degradation pathway. As to quaternary structure, forms heterodimers with envelope protein E in the endoplasmic reticulum and Golgi. Homodimer; in the endoplasmic reticulum and Golgi. Interacts with protein prM. Interacts with non-structural protein 1. In terms of assembly, homodimer; Homohexamer when secreted. Interacts with envelope protein E. Interacts with host PRKAA1. As to quaternary structure, interacts (via N-terminus) with serine protease NS3. Forms a heterodimer with serine protease NS3. May form homooligomers. In terms of assembly, forms a heterodimer with NS2B. Interacts with NS4B. Interacts with unphosphorylated RNA-directed RNA polymerase NS5; this interaction stimulates RNA-directed RNA polymerase NS5 guanylyltransferase activity. Interacts with host SHFL. As to quaternary structure, interacts with host MAVS; this interaction inhibits the synthesis of IFN-beta. Interacts with host SHFL. Interacts with host AUP1; the interaction occurs in the presence of Dengue virus NS4B and induces lipophagy which facilitates production of virus progeny particles. May interact with host SRPRA and SEC61G. Interacts with serine protease NS3. In terms of assembly, homodimer. Interacts with host STAT2; this interaction inhibits the phosphorylation of the latter, and, when all viral proteins are present (polyprotein), targets STAT2 for degradation. Interacts with serine protease NS3. Interacts with host PAF1 complex; the interaction may prevent the recruitment of the PAF1 complex to interferon-responsive genes, and thus reduces the immune response. Specific enzymatic cleavages in vivo yield mature proteins. Cleavages in the lumen of endoplasmic reticulum are performed by host signal peptidase, whereas cleavages in the cytoplasmic side are performed by serine protease NS3. Signal cleavage at the 2K-4B site requires a prior NS3 protease-mediated cleavage at the 4A-2K site. In terms of processing, cleaved in post-Golgi vesicles by a host furin, releasing the mature small envelope protein M, and peptide pr. This cleavage is incomplete as up to 30% of viral particles still carry uncleaved prM. Post-translationally, N-glycosylated. N-glycosylated. The excreted form is glycosylated and this is required for efficient secretion of the protein from infected cells. In terms of processing, acetylated by host KAT5. Acetylation modulates NS3 RNA-binding and unwinding activities and plays an important positive role for viral replication. Post-translationally, phosphorylated on serines residues. This phosphorylation may trigger NS5 nuclear localization. Sumoylation of RNA-directed RNA polymerase NS5 increases NS5 protein stability allowing proper viral RNA replication.

The protein localises to the virion. Its subcellular location is the host nucleus. It localises to the host cytoplasm. It is found in the host perinuclear region. The protein resides in the secreted. The protein localises to the virion membrane. Its subcellular location is the host endoplasmic reticulum membrane. It localises to the host mitochondrion. The catalysed reaction is Selective hydrolysis of -Xaa-Xaa-|-Yaa- bonds in which each of the Xaa can be either Arg or Lys and Yaa can be either Ser or Ala.. The enzyme catalyses RNA(n) + a ribonucleoside 5'-triphosphate = RNA(n+1) + diphosphate. It catalyses the reaction a ribonucleoside 5'-triphosphate + H2O = a ribonucleoside 5'-diphosphate + phosphate + H(+). It carries out the reaction ATP + H2O = ADP + phosphate + H(+). The catalysed reaction is a 5'-end (5'-triphosphoguanosine)-ribonucleoside in mRNA + S-adenosyl-L-methionine = a 5'-end (N(7)-methyl 5'-triphosphoguanosine)-ribonucleoside in mRNA + S-adenosyl-L-homocysteine. The enzyme catalyses a 5'-end (N(7)-methyl 5'-triphosphoguanosine)-ribonucleoside in mRNA + S-adenosyl-L-methionine = a 5'-end (N(7)-methyl 5'-triphosphoguanosine)-(2'-O-methyl-ribonucleoside) in mRNA + S-adenosyl-L-homocysteine + H(+). Plays a role in virus budding by binding to the cell membrane and gathering the viral RNA into a nucleocapsid that forms the core of a mature virus particle. During virus entry, may induce genome penetration into the host cytoplasm after hemifusion induced by the surface proteins. Can migrate to the cell nucleus where it modulates host functions. Overcomes the anti-viral effects of host EXOC1 by sequestering and degrading the latter through the proteasome degradation pathway. Its function is as follows. Inhibits RNA silencing by interfering with host Dicer. In terms of biological role, prevents premature fusion activity of envelope proteins in trans-Golgi by binding to envelope protein E at pH6.0. After virion release in extracellular space, gets dissociated from E dimers. Functionally, acts as a chaperone for envelope protein E during intracellular virion assembly by masking and inactivating envelope protein E fusion peptide. prM is the only viral peptide matured by host furin in the trans-Golgi network probably to avoid catastrophic activation of the viral fusion activity in acidic Golgi compartment prior to virion release. prM-E cleavage is inefficient, and many virions are only partially matured. These uncleaved prM would play a role in immune evasion. May play a role in virus budding. Exerts cytotoxic effects by activating a mitochondrial apoptotic pathway through M ectodomain. May display a viroporin activity. Its function is as follows. Binds to host cell surface receptor and mediates fusion between viral and cellular membranes. Envelope protein is synthesized in the endoplasmic reticulum in the form of heterodimer with protein prM. They play a role in virion budding in the ER, and the newly formed immature particle is covered with 60 spikes composed of heterodimer between precursor prM and envelope protein E. The virion is transported to the Golgi apparatus where the low pH causes dissociation of PrM-E heterodimers and formation of E homodimers. prM-E cleavage is inefficient, and many virions are only partially matured. These uncleaved prM would play a role in immune evasion. In terms of biological role, involved in immune evasion, pathogenesis and viral replication. Once cleaved off the polyprotein, is targeted to three destinations: the viral replication cycle, the plasma membrane and the extracellular compartment. Essential for viral replication. Required for formation of the replication complex and recruitment of other non-structural proteins to the ER-derived membrane structures. Excreted as a hexameric lipoparticle that plays a role against host immune response. Antagonizing the complement function. Binds to the host macrophages and dendritic cells. Inhibits signal transduction originating from Toll-like receptor 3 (TLR3). Mediates complement activation, which may contribute to the pathogenesis of the vascular leakage that occurs in severe dengue disease. Activates autophagy through the AMPK/ERK/mTOR signaling pathway. Mechanistically, acts as the assembly platform for STK11-AMPK interactions and promotes STK11-AMPK interactions. In turn, promotes phosphorylation of the AMPK kinase structural domain and activates AMPK, thereby positively regulating the AMPK/ERK/mTOR signaling pathway and inducing autophagy. Functionally, disrupts the host endothelial glycocalyx layer of host pulmonary microvascular endothelial cells, inducing degradation of sialic acid and shedding of heparan sulfate proteoglycans. NS1 induces expression of sialidases, heparanase, and activates cathepsin L, which activates heparanase via enzymatic cleavage. These effects are probably linked to the endothelial hyperpermeability observed in severe dengue disease. Component of the viral RNA replication complex that functions in virion assembly and antagonizes the host immune response. Its function is as follows. Required cofactor for the serine protease function of NS3. May have membrane-destabilizing activity and form viroporins. In terms of biological role, displays three enzymatic activities: serine protease, NTPase and RNA helicase. NS3 serine protease, in association with NS2B, performs its autocleavage and cleaves the polyprotein at dibasic sites in the cytoplasm: C-prM, NS2A-NS2B, NS2B-NS3, NS3-NS4A, NS4A-2K and NS4B-NS5. NS3 RNA helicase binds RNA and unwinds dsRNA in the 3' to 5' direction. Functionally, regulates the ATPase activity of the NS3 helicase activity. NS4A allows NS3 helicase to conserve energy during unwinding. Plays a role in the inhibition of the host innate immune response. Interacts with host MAVS and thereby prevents the interaction between RIGI and MAVS. In turn, IFN-beta production is impaired. Interacts with host AUP1 which mediates induction of lipophagy in host cells and facilitates production of virus progeny particles. Functions as a signal peptide for NS4B and is required for the interferon antagonism activity of the latter. Its function is as follows. Induces the formation of ER-derived membrane vesicles where the viral replication takes place. Inhibits interferon (IFN)-induced host STAT1 phosphorylation and nuclear translocation, thereby preventing the establishment of cellular antiviral state by blocking the IFN-alpha/beta pathway. In terms of biological role, replicates the viral (+) and (-) RNA genome, and performs the capping of genomes in the cytoplasm. NS5 methylates viral RNA cap at guanine N-7 and ribose 2'-O positions. Besides its role in RNA genome replication, also prevents the establishment of cellular antiviral state by blocking the interferon-alpha/beta (IFN-alpha/beta) signaling pathway. Inhibits host TYK2 and STAT2 phosphorylation, thereby preventing activation of JAK-STAT signaling pathway. May reduce immune responses by preventing the recruitment of the host PAF1 complex to interferon-responsive genes. The polypeptide is Genome polyprotein (Aedimorphus (Red guenon)).